Reading from the N-terminus, the 316-residue chain is Melanocyte-stimulating hormone receptor (316 aa).

Topologically, residues 1-37 (MPMQGAQRKLLGSLNSTPTATSNLGLAANHTGAPCLE) are extracellular. The N-linked (GlcNAc...) asparagine glycan is linked to asparagine 29. A helical transmembrane segment spans residues 38 to 63 (VSIPDGLFLSLGLVSLVENMLVVAAI). Over 64-72 (AKNRNLHSP) the chain is Cytoplasmic. A helical membrane pass occupies residues 73–93 (MYCFICCLALSDLLVSGSNML). Over 94–118 (ETAVVVLLEAGALATRASVVQQLHN) the chain is Extracellular. Residues 119-140 (TIDVLTYSSMLCSLCFVGAIAV) traverse the membrane as a helical segment. Residues 141 to 163 (DRYISIFYALRYHSIMTLPRVQR) lie on the Cytoplasmic side of the membrane. The chain crosses the membrane as a helical span at residues 164–183 (VIAAIWVASVTSSTLFITYY). The Extracellular segment spans residues 184–191 (EHVVALLC). Residues 192-210 (LVVFLTMLVLMAVLYVHML) form a helical membrane-spanning segment. At 211–239 (ARACQHAQGITRLHKRQPPAHQGFGLRGA) the chain is on the cytoplasmic side. Residues 240 to 265 (ATLTILLGIFFLCWGPFFLHLTLVVF) form a helical membrane-spanning segment. The Extracellular portion of the chain corresponds to 266 to 278 (CPQHLTCSCIFKN). The helical transmembrane segment at 279–299 (FKVFLTLIICNTIIDPLIYAF) threads the bilayer. The Cytoplasmic segment spans residues 300 to 316 (RSQELCRTLKEVLLCSW). Cysteine 314 is lipidated: S-palmitoyl cysteine.

The protein belongs to the G-protein coupled receptor 1 family. Interacts with MGRN1, but does not undergo MGRN1-mediated ubiquitination; this interaction competes with GNAS-binding and thus inhibits agonist-induced cAMP production. Interacts with OPN3; the interaction results in a decrease in MC1R-mediated cAMP signaling and ultimately a decrease in melanin production in melanocytes.

Its subcellular location is the cell membrane. Functionally, receptor for MSH (alpha, beta and gamma) and ACTH. The activity of this receptor is mediated by G proteins which activate adenylate cyclase. Mediates melanogenesis, the production of eumelanin (black/brown) and phaeomelanin (red/yellow), via regulation of cAMP signaling in melanocytes. The polypeptide is Melanocyte-stimulating hormone receptor (MC1R) (Cebus albifrons (White-fronted capuchin)).